The sequence spans 133 residues: Fluoride-specific ion channel FluC 4 (133 aa).

3 helical membrane-spanning segments follow: residues I7–V27, W37–G57, and L60–G80. Na(+) is bound by residues G79 and T82. A helical membrane pass occupies residues I107–W127.

The protein belongs to the fluoride channel Fluc/FEX (TC 1.A.43) family.

The protein localises to the cell inner membrane. It catalyses the reaction fluoride(in) = fluoride(out). Its activity is regulated as follows. Na(+) is not transported, but it plays an essential structural role and its presence is essential for fluoride channel function. Its function is as follows. Fluoride-specific ion channel. Important for reducing fluoride concentration in the cell, thus reducing its toxicity. The sequence is that of Fluoride-specific ion channel FluC 4 from Brucella abortus biovar 1 (strain 9-941).